Reading from the N-terminus, the 359-residue chain is Chorismate synthase (359 aa).

Residue Arg-47 participates in NADP(+) binding. FMN-binding positions include 123–125, Gly-283, 298–302, and Arg-326; these read RSS and KPTSS.

The protein belongs to the chorismate synthase family. In terms of assembly, homotetramer. FMNH2 is required as a cofactor.

The catalysed reaction is 5-O-(1-carboxyvinyl)-3-phosphoshikimate = chorismate + phosphate. Its pathway is metabolic intermediate biosynthesis; chorismate biosynthesis; chorismate from D-erythrose 4-phosphate and phosphoenolpyruvate: step 7/7. Functionally, catalyzes the anti-1,4-elimination of the C-3 phosphate and the C-6 proR hydrogen from 5-enolpyruvylshikimate-3-phosphate (EPSP) to yield chorismate, which is the branch point compound that serves as the starting substrate for the three terminal pathways of aromatic amino acid biosynthesis. This reaction introduces a second double bond into the aromatic ring system. The sequence is that of Chorismate synthase from Chlamydia felis (strain Fe/C-56) (Chlamydophila felis).